The sequence spans 440 residues: Zinc finger MYND domain-containing protein 10 (440 aa).

The tract at residues Gln366–Lys440 is interaction with DNAAF11. Cys394, Cys397, Cys405, Cys408, Cys414, Cys418, His426, and Cys430 together coordinate Zn(2+). An MYND-type zinc finger spans residues Cys394 to Cys430.

The protein belongs to the ZMYND10 family. Interacts (via C-terminus) with DNAAF11 (via CS domain); this interaction stabilizes DNAAF11 at the protein level. Interacts (via C-terminus) with DNAL1; this interaction stabilizes DNAL1 at the protein level. Interacts with DNAAF4, HSPA8, IQUB, RUVBL2 and DYNTL5.

The protein resides in the cytoplasm. Its subcellular location is the cytoskeleton. The protein localises to the microtubule organizing center. It is found in the centrosome. It localises to the centriolar satellite. The protein resides in the apical cell membrane. Its subcellular location is the dynein axonemal particle. Functionally, plays a role in axonemal structure organization and motility. Involved in axonemal pre-assembly of inner and outer dynein arms (IDA and ODA, respectively) for proper axoneme building for cilia motility. May act by indirectly regulating transcription of dynein proteins. The protein is Zinc finger MYND domain-containing protein 10 of Homo sapiens (Human).